Consider the following 419-residue polypeptide: E3 ubiquitin-protein ligase RNF130 (419 aa).

An N-terminal signal peptide occupies residues M1–A27. Residues D28 to S194 lie on the Extracellular side of the membrane. N-linked (GlcNAc...) asparagine glycosylation is found at N29, N40, N112, N135, N172, and N189. The region spanning I105–Q176 is the PA domain. A helical transmembrane segment spans residues L195–F217. Over I218–F419 the chain is Cytoplasmic. An RING-type zinc finger spans residues C264–K305.

As to expression, expression is highest in liver, with lesser amounts in the lung, spleen, brain, heart, kidney and testis.

It is found in the membrane. The protein resides in the cytoplasm. The catalysed reaction is S-ubiquitinyl-[E2 ubiquitin-conjugating enzyme]-L-cysteine + [acceptor protein]-L-lysine = [E2 ubiquitin-conjugating enzyme]-L-cysteine + N(6)-ubiquitinyl-[acceptor protein]-L-lysine.. It functions in the pathway protein modification; protein ubiquitination. Its function is as follows. Acts as an E3 ubiquitin-protein ligase. May have a role during the programmed cell death of hematopoietic cells. This Mus musculus (Mouse) protein is E3 ubiquitin-protein ligase RNF130.